Reading from the N-terminus, the 710-residue chain is Bifunctional sesterterpene synthase (710 aa).

Residues 1 to 327 (MEFKFSAVVD…RYYTDASFSE (327 aa)) are stellata-2,6,19-trien synthase. Mg(2+) is bound by residues Asp-92 and Asp-96. Residues Asp-92, Asp-96, 181-184 (RVHD), and 229-233 (SWDKE) each bind substrate. A DDXXD motif 1 motif is present at residues 92–96 (DDVTD). An NSE motif motif is present at residues 278 to 286 (YLRVFEEVK). 318–319 (RY) is a substrate binding site. The geranylgeranyl diphosphate synthase stretch occupies residues 328 to 709 (RQLEWMKNGI…LRLIFELLRN (382 aa)). The disordered stretch occupies residues 365–404 (HHAVTSNGTGTGSHDTLNGDGTAHENNSRDASIPGRTTNG). Residues 368 to 380 (VTSNGTGTGSHDT) are compositionally biased toward polar residues. Residues Lys-430, Arg-433, and His-462 each contribute to the isopentenyl diphosphate site. Residues Asp-469 and Asp-473 each contribute to the Mg(2+) site. The short motif at 469 to 473 (DDLED) is the DDXXD motif 2 element. Dimethylallyl diphosphate is bound at residue Arg-478. Arg-479 is a binding site for isopentenyl diphosphate. Residues Lys-556, Thr-557, Gln-592, Asn-599, Lys-609, and Lys-619 each coordinate dimethylallyl diphosphate.

This sequence in the C-terminal section; belongs to the FPP/GGPP synthase family. The protein in the N-terminal section; belongs to the terpene synthase family. In terms of assembly, hexamer.

It carries out the reaction 4 isopentenyl diphosphate + dimethylallyl diphosphate = (2E,6E,10E,14E)-geranylfarnesyl diphosphate + 4 diphosphate. The catalysed reaction is (2E,6E,10E,14E)-geranylfarnesyl diphosphate = variecoladiene + diphosphate. The protein operates within secondary metabolite biosynthesis; terpenoid biosynthesis. Functionally, multifunctional sesterterpene synthase; part of the gene cluster that mediates the biosynthesis of the sesterterpene variecolin. The first step in the pathway is performed by the variecoladiene synthase vrcA that possesses both prenyl transferase and terpene cyclase activity, converting isopentenyl diphosphate and dimethylallyl diphosphate into geranylfarnesyl pyrophosphate (GFPP) and then converting GFPP into the tetracyclic variecoladiene. The cytochrome P450 monooxygenase vrcB then catalyzes multiple oxidations at C-5 and C-20 positions to yield variecolin. The polypeptide is Bifunctional sesterterpene synthase (Aspergillus aculeatus (strain ATCC 16872 / CBS 172.66 / WB 5094)).